The primary structure comprises 83 residues: U2-hexatoxin-Hi1a (83 aa).

Positions 1–23 are cleaved as a signal peptide; the sequence is MRNTTFLVLNVMLLVSVALFCAA. A propeptide spanning residues 24–45 is cleaved from the precursor; it reads DPEMEKSSFAEILDTGNPEQER. Disulfide bonds link Cys-47–Cys-63, Cys-54–Cys-68, Cys-62–Cys-78, and Cys-70–Cys-76.

It belongs to the neurotoxin 07 (Beta/delta-agtx) family. In terms of tissue distribution, expressed by the venom gland.

It is found in the secreted. Functionally, inhibits sodium channels (Nav) of insects. This is U2-hexatoxin-Hi1a from Hadronyche infensa (Fraser island funnel-web spider).